Reading from the N-terminus, the 505-residue chain is L-amino-acid oxidase (505 aa).

Residues 1–18 (MNVFLMFSLLFLAALGSC) form the signal peptide. Cys28 and Cys191 form a disulfide bridge. Residues 61–62 (MS), 81–82 (EA), Arg89, and 105–108 (GPMR) contribute to the FAD site. Residue Arg108 coordinates substrate. An N-linked (GlcNAc...) asparagine glycan is attached at Asn190. A substrate-binding site is contributed by His241. Residue Val279 participates in FAD binding. Cys349 and Cys430 are joined by a disulfide. Asn379 carries N-linked (GlcNAc...) asparagine glycosylation. Tyr390 is a substrate binding site. FAD contacts are provided by residues Glu475 and 482–487 (GWIDST). 482–483 (GW) contacts substrate.

This sequence belongs to the flavin monoamine oxidase family. FIG1 subfamily. As to quaternary structure, monomer. This is in contrast with most of its orthologs, that are non-covalently linked homodimers. The cofactor is FAD. N-glycosylated. Expressed by the venom gland.

The protein localises to the secreted. The enzyme catalyses an L-alpha-amino acid + O2 + H2O = a 2-oxocarboxylate + H2O2 + NH4(+). It carries out the reaction L-leucine + O2 + H2O = 4-methyl-2-oxopentanoate + H2O2 + NH4(+). Its function is as follows. Catalyzes an oxidative deamination of predominantly hydrophobic and aromatic L-amino acids, thus producing hydrogen peroxide that may contribute to the diverse toxic effects of this enzyme. Shows activity on L-Leu. Exhibits diverse biological activities, such as hemorrhage, edema, antibacterial and antiparasitic activities, as well as regulation of platelet aggregation. Effects of snake L-amino oxidases on platelets are controversial, since they either induce aggregation or inhibit agonist-induced aggregation. These different effects are probably due to different experimental conditions. This protein has an ability to induce hemolysis and apoptosis. The protein is L-amino-acid oxidase of Protobothrops flavoviridis (Habu).